A 251-amino-acid chain; its full sequence is 2,3-bisphosphoglycerate-dependent phosphoglycerate mutase (251 aa).

Substrate contacts are provided by residues 13–20, 26–27, arginine 65, 92–95, lysine 103, 119–120, and 186–187; these read RHGESEWN, TG, ERHY, RR, and GN. Histidine 14 (tele-phosphohistidine intermediate) is an active-site residue. Glutamate 92 acts as the Proton donor/acceptor in catalysis.

Belongs to the phosphoglycerate mutase family. BPG-dependent PGAM subfamily.

The catalysed reaction is (2R)-2-phosphoglycerate = (2R)-3-phosphoglycerate. The protein operates within carbohydrate degradation; glycolysis; pyruvate from D-glyceraldehyde 3-phosphate: step 3/5. Catalyzes the interconversion of 2-phosphoglycerate and 3-phosphoglycerate. The sequence is that of 2,3-bisphosphoglycerate-dependent phosphoglycerate mutase from Rhodococcus jostii (strain RHA1).